Here is a 340-residue protein sequence, read N- to C-terminus: Phenylalanine--tRNA ligase alpha subunit (340 aa).

Glu-255 is a binding site for Mg(2+).

The protein belongs to the class-II aminoacyl-tRNA synthetase family. Phe-tRNA synthetase alpha subunit type 1 subfamily. Tetramer of two alpha and two beta subunits. It depends on Mg(2+) as a cofactor.

It localises to the cytoplasm. It catalyses the reaction tRNA(Phe) + L-phenylalanine + ATP = L-phenylalanyl-tRNA(Phe) + AMP + diphosphate + H(+). The sequence is that of Phenylalanine--tRNA ligase alpha subunit from Exiguobacterium sibiricum (strain DSM 17290 / CCUG 55495 / CIP 109462 / JCM 13490 / 255-15).